The chain runs to 513 residues: ATP synthase subunit alpha (513 aa).

An ATP-binding site is contributed by 169-176; sequence GDRQTGKT.

Belongs to the ATPase alpha/beta chains family. F-type ATPases have 2 components, CF(1) - the catalytic core - and CF(0) - the membrane proton channel. CF(1) has five subunits: alpha(3), beta(3), gamma(1), delta(1), epsilon(1). CF(0) has three main subunits: a(1), b(2) and c(9-12). The alpha and beta chains form an alternating ring which encloses part of the gamma chain. CF(1) is attached to CF(0) by a central stalk formed by the gamma and epsilon chains, while a peripheral stalk is formed by the delta and b chains.

Its subcellular location is the cell inner membrane. It catalyses the reaction ATP + H2O + 4 H(+)(in) = ADP + phosphate + 5 H(+)(out). Its function is as follows. Produces ATP from ADP in the presence of a proton gradient across the membrane. The alpha chain is a regulatory subunit. The chain is ATP synthase subunit alpha from Klebsiella pneumoniae subsp. pneumoniae (strain ATCC 700721 / MGH 78578).